Here is a 134-residue protein sequence, read N- to C-terminus: Small ribosomal subunit protein uS8 (134 aa).

The protein belongs to the universal ribosomal protein uS8 family. As to quaternary structure, part of the 30S ribosomal subunit. Contacts proteins S5 and S12.

Functionally, one of the primary rRNA binding proteins, it binds directly to 16S rRNA central domain where it helps coordinate assembly of the platform of the 30S subunit. The polypeptide is Small ribosomal subunit protein uS8 (Thermotoga neapolitana (strain ATCC 49049 / DSM 4359 / NBRC 107923 / NS-E)).